Consider the following 481-residue polypeptide: Glutamate--glyoxylate aminotransferase 1 (481 aa).

K291 is subject to N6-(pyridoxal phosphate)lysine. The short motif at 479-481 (SKM) is the Peroxisomal targeting signal element.

The protein belongs to the class-I pyridoxal-phosphate-dependent aminotransferase family. Alanine aminotransferase subfamily. In terms of assembly, homodimer. Requires pyridoxal 5'-phosphate as cofactor. Post-translationally, the N-terminus is blocked. As to expression, mostly expressed in leaves, and, to a lower extent, in shoots, stems, flowers, seedlings and green siliques.

It is found in the peroxisome. The catalysed reaction is L-alanine + 2-oxoglutarate = pyruvate + L-glutamate. It carries out the reaction glyoxylate + L-alanine = glycine + pyruvate. The enzyme catalyses glycine + 2-oxoglutarate = glyoxylate + L-glutamate. Its pathway is amino-acid biosynthesis; glycine biosynthesis; glycine from glyoxylate: step 1/1. It participates in photosynthesis; C4 acid pathway. It functions in the pathway amino-acid degradation; L-alanine degradation via transaminase pathway; pyruvate from L-alanine: step 1/1. Its function is as follows. Catalyzes the glutamate:glyoxylate (GGT or GGAT), alanine:glyoxylate (AGT), alanine:2-oxoglutarate (AKT) and glutamate:pyruvate (GPT) aminotransferase reactions in peroxisomes. Required for abscisic acid (ABA)- and stress-mediated responses in an H(2)O(2)-dependent manner. Functions as a photorespiratory aminotransferase that modulates amino acid content during photorespiration (GGAT activity); promotes serine, glycine and citrulline metabolism in response to light. In Arabidopsis thaliana (Mouse-ear cress), this protein is Glutamate--glyoxylate aminotransferase 1 (GGAT1).